We begin with the raw amino-acid sequence, 118 residues long: Histone H4 (118 aa).

Residues 1–39 (MATDTGSGRGKGGKGVTLGKGSKGAKASKGGKRIRTKTQ) are disordered. Gly residues predominate over residues 7–22 (SGRGKGGKGVTLGKGS).

Belongs to the histone H4 family. In terms of assembly, the nucleosome is a histone octamer containing two molecules each of H2A, H2B, H3 and H4 assembled in one H3-H4 heterotetramer and two H2A-H2B heterodimers. The octamer wraps approximately 147 bp of DNA.

Its subcellular location is the nucleus. It localises to the chromosome. Its function is as follows. Core component of nucleosome. Nucleosomes wrap and compact DNA into chromatin, limiting DNA accessibility to the cellular machineries which require DNA as a template. Histones thereby play a central role in transcription regulation, DNA repair, DNA replication and chromosomal stability. DNA accessibility is regulated via a complex set of post-translational modifications of histones, also called histone code, and nucleosome remodeling. The protein is Histone H4 of Entamoeba histolytica (strain ATCC 30459 / HM-1:IMSS / ABRM).